The chain runs to 168 residues: Lipoprotein signal peptidase (168 aa).

4 consecutive transmembrane segments (helical) span residues 5–25, 37–57, 59–79, and 85–105; these read SPYA…KHLV, LVPF…SMFS, FGDT…LYLA, and GHVI…GNLI. Residues D115 and D133 contribute to the active site. The helical transmembrane segment at 125-145 threads the bilayer; the sequence is SFAIFNLADAFISVGAALVVF.

Belongs to the peptidase A8 family.

It is found in the cell inner membrane. The enzyme catalyses Release of signal peptides from bacterial membrane prolipoproteins. Hydrolyzes -Xaa-Yaa-Zaa-|-(S,diacylglyceryl)Cys-, in which Xaa is hydrophobic (preferably Leu), and Yaa (Ala or Ser) and Zaa (Gly or Ala) have small, neutral side chains.. It functions in the pathway protein modification; lipoprotein biosynthesis (signal peptide cleavage). In terms of biological role, this protein specifically catalyzes the removal of signal peptides from prolipoproteins. This chain is Lipoprotein signal peptidase, found in Mesorhizobium japonicum (strain LMG 29417 / CECT 9101 / MAFF 303099) (Mesorhizobium loti (strain MAFF 303099)).